Here is a 351-residue protein sequence, read N- to C-terminus: Foldase protein PrsA 1 (351 aa).

A signal peptide spans 1-22 (MKNSNKLIASVVTLASVMALAA). The N-palmitoyl cysteine moiety is linked to residue Cys23. Cys23 carries the S-diacylglycerol cysteine lipid modification. The PpiC domain occupies 145–240 (TPTMAVEMIT…KKFYIVKVTK (96 aa)). Low complexity-rich tracts occupy residues 303 to 317 (KTKA…SESS) and 326 to 351 (ESEQ…PAAQ). The segment at 303-351 (KTKAASESSTTSESSKAAEENPSESEQTQTSSAEEPTETEAQTQEPAAQ) is disordered.

Belongs to the PrsA family.

It localises to the cell membrane. It catalyses the reaction [protein]-peptidylproline (omega=180) = [protein]-peptidylproline (omega=0). Its function is as follows. Plays a major role in protein secretion by helping the post-translocational extracellular folding of several secreted proteins. The chain is Foldase protein PrsA 1 (prsA1) from Streptococcus pyogenes serotype M1.